Reading from the N-terminus, the 137-residue chain is Protein E6 (137 aa).

Zinc fingers lie at residues 17–53 (CLWC…CTIC) and 90–127 (CCYC…CYDC).

The protein belongs to the papillomaviridae E6 protein family. As to quaternary structure, forms homodimers. Interacts with ubiquitin-protein ligase UBE3A/E6-AP; this interaction stimulates UBE3A ubiquitin activity. Interacts with host BAK1. Interacts with human FBLN1.

Its subcellular location is the host cytoplasm. The protein localises to the host nucleus. In terms of biological role, plays a major role in the induction and maintenance of cellular transformation. E6 associates with host UBE3A/E6-AP ubiquitin-protein ligase and modulates its activity. Protects host keratinocytes from apoptosis by mediating the degradation of host BAK1. May also inhibit host immune response. This is Protein E6 from Bos taurus (Bovine).